Here is a 341-residue protein sequence, read N- to C-terminus: Elongation factor Ts (341 aa).

The involved in Mg(2+) ion dislocation from EF-Tu stretch occupies residues 80-83 (TDFV).

Belongs to the EF-Ts family.

The protein resides in the cytoplasm. Functionally, associates with the EF-Tu.GDP complex and induces the exchange of GDP to GTP. It remains bound to the aminoacyl-tRNA.EF-Tu.GTP complex up to the GTP hydrolysis stage on the ribosome. The protein is Elongation factor Ts of Lactobacillus gasseri (strain ATCC 33323 / DSM 20243 / BCRC 14619 / CIP 102991 / JCM 1131 / KCTC 3163 / NCIMB 11718 / NCTC 13722 / AM63).